The chain runs to 315 residues: GTP cyclohydrolase MptA (315 aa).

Belongs to the GTP cyclohydrolase IV family. In terms of assembly, homodimer. It depends on Fe(2+) as a cofactor.

It carries out the reaction GTP + H2O = 7,8-dihydroneopterin 2',3'-cyclic phosphate + formate + diphosphate + H(+). It functions in the pathway cofactor biosynthesis; 5,6,7,8-tetrahydromethanopterin biosynthesis. Converts GTP to 7,8-dihydro-D-neopterin 2',3'-cyclic phosphate, the first intermediate in the biosynthesis of coenzyme methanopterin. The protein is GTP cyclohydrolase MptA of Methanococcus maripaludis (strain C5 / ATCC BAA-1333).